Here is a 209-residue protein sequence, read N- to C-terminus: FMN-dependent NADH:quinone oxidoreductase (209 aa).

FMN is bound by residues Ser9, 19–21 (SVS), and 143–146 (TRGG).

Belongs to the azoreductase type 1 family. Homodimer. The cofactor is FMN.

The catalysed reaction is 2 a quinone + NADH + H(+) = 2 a 1,4-benzosemiquinone + NAD(+). The enzyme catalyses N,N-dimethyl-1,4-phenylenediamine + anthranilate + 2 NAD(+) = 2-(4-dimethylaminophenyl)diazenylbenzoate + 2 NADH + 2 H(+). In terms of biological role, quinone reductase that provides resistance to thiol-specific stress caused by electrophilic quinones. Also exhibits azoreductase activity. Catalyzes the reductive cleavage of the azo bond in aromatic azo compounds to the corresponding amines. The chain is FMN-dependent NADH:quinone oxidoreductase from Leptothrix cholodnii (strain ATCC 51168 / LMG 8142 / SP-6) (Leptothrix discophora (strain SP-6)).